Reading from the N-terminus, the 749-residue chain is 5-methyltetrahydropteroyltriglutamate--homocysteine methyltransferase (749 aa).

5-methyltetrahydropteroyltri-L-glutamate-binding positions include 15 to 18 (RELK) and Lys-114. Residues 425-427 (IGS) and Glu-478 each bind L-homocysteine. L-methionine contacts are provided by residues 425 to 427 (IGS) and Glu-478. Trp-555 provides a ligand contact to 5-methyltetrahydropteroyltri-L-glutamate. Asp-593 lines the L-homocysteine pocket. Asp-593 serves as a coordination point for L-methionine. Position 599 (Glu-599) interacts with 5-methyltetrahydropteroyltri-L-glutamate. 3 residues coordinate Zn(2+): His-636, Cys-638, and Glu-660. Catalysis depends on His-689, which acts as the Proton donor. Cys-721 contributes to the Zn(2+) binding site.

Belongs to the vitamin-B12 independent methionine synthase family. Requires Zn(2+) as cofactor.

The catalysed reaction is 5-methyltetrahydropteroyltri-L-glutamate + L-homocysteine = tetrahydropteroyltri-L-glutamate + L-methionine. It participates in amino-acid biosynthesis; L-methionine biosynthesis via de novo pathway; L-methionine from L-homocysteine (MetE route): step 1/1. Catalyzes the transfer of a methyl group from 5-methyltetrahydrofolate to homocysteine resulting in methionine formation. The protein is 5-methyltetrahydropteroyltriglutamate--homocysteine methyltransferase of Streptococcus pneumoniae serotype 2 (strain D39 / NCTC 7466).